The following is a 173-amino-acid chain: Cytidylate kinase (173 aa).

7 to 15 (GLAGTGTST) provides a ligand contact to ATP.

Belongs to the cytidylate kinase family. Type 2 subfamily.

Its subcellular location is the cytoplasm. The catalysed reaction is CMP + ATP = CDP + ADP. It catalyses the reaction dCMP + ATP = dCDP + ADP. This is Cytidylate kinase from Methanosphaera stadtmanae (strain ATCC 43021 / DSM 3091 / JCM 11832 / MCB-3).